The primary structure comprises 27 residues: Paragonial peptide PS-1 (27 aa).

The segment covering 1–17 (DVPSANANANNQRTAAA) has biased composition (low complexity). A disordered region spans residues 1–27 (DVPSANANANNQRTAAAKPQANAEASS).

As to expression, main cells of the accessory glands of males (paragonial gland).

The protein resides in the secreted. In terms of biological role, represses female sexual receptivity and stimulates oviposition. This peptide has a low activity. The protein is Paragonial peptide PS-1 (PapC) of Drosophila funebris (Fruit fly).